The following is a 513-amino-acid chain: ATP synthase subunit alpha (513 aa).

169–176 (GDRQTGKT) lines the ATP pocket.

This sequence belongs to the ATPase alpha/beta chains family. F-type ATPases have 2 components, CF(1) - the catalytic core - and CF(0) - the membrane proton channel. CF(1) has five subunits: alpha(3), beta(3), gamma(1), delta(1), epsilon(1). CF(0) has three main subunits: a(1), b(2) and c(9-12). The alpha and beta chains form an alternating ring which encloses part of the gamma chain. CF(1) is attached to CF(0) by a central stalk formed by the gamma and epsilon chains, while a peripheral stalk is formed by the delta and b chains.

The protein resides in the cell inner membrane. It carries out the reaction ATP + H2O + 4 H(+)(in) = ADP + phosphate + 5 H(+)(out). Functionally, produces ATP from ADP in the presence of a proton gradient across the membrane. The alpha chain is a regulatory subunit. The sequence is that of ATP synthase subunit alpha from Haemophilus influenzae (strain 86-028NP).